Reading from the N-terminus, the 366-residue chain is NADH-quinone oxidoreductase subunit D (366 aa).

This sequence belongs to the complex I 49 kDa subunit family. In terms of assembly, NDH-1 is composed of 14 different subunits. Subunits NuoB, C, D, E, F, and G constitute the peripheral sector of the complex.

Its subcellular location is the cell membrane. It carries out the reaction a quinone + NADH + 5 H(+)(in) = a quinol + NAD(+) + 4 H(+)(out). NDH-1 shuttles electrons from NADH, via FMN and iron-sulfur (Fe-S) centers, to quinones in the respiratory chain. The immediate electron acceptor for the enzyme in this species is believed to be a menaquinone. Couples the redox reaction to proton translocation (for every two electrons transferred, four hydrogen ions are translocated across the cytoplasmic membrane), and thus conserves the redox energy in a proton gradient. This chain is NADH-quinone oxidoreductase subunit D, found in Bacillus thuringiensis subsp. konkukian (strain 97-27).